We begin with the raw amino-acid sequence, 294 residues long: Bifunctional protein FolD (294 aa).

Residues 166 to 168 (GRS), serine 191, and isoleucine 232 each bind NADP(+).

The protein belongs to the tetrahydrofolate dehydrogenase/cyclohydrolase family. In terms of assembly, homodimer.

The enzyme catalyses (6R)-5,10-methylene-5,6,7,8-tetrahydrofolate + NADP(+) = (6R)-5,10-methenyltetrahydrofolate + NADPH. It carries out the reaction (6R)-5,10-methenyltetrahydrofolate + H2O = (6R)-10-formyltetrahydrofolate + H(+). It participates in one-carbon metabolism; tetrahydrofolate interconversion. Its function is as follows. Catalyzes the oxidation of 5,10-methylenetetrahydrofolate to 5,10-methenyltetrahydrofolate and then the hydrolysis of 5,10-methenyltetrahydrofolate to 10-formyltetrahydrofolate. The chain is Bifunctional protein FolD from Bradyrhizobium sp. (strain ORS 278).